The chain runs to 257 residues: MSLLSKTRELNTLLQKHKGIAVDFKDVAQTISSVTVTNVFIVSRRGKILGSSLNELLKSQRINEMLESKHIPSEYTELLMDVKQTESNIDIDNELTVFPPEDKEVFSSSRTTVFPILGGGERLGTLVLGRVKDDFNENDLVLGEYAATVIGMEILREKHNEVEKEARDKAAITMAINSLSYSEKEAIEHIFEELGGNEGLLIASKVADRVGITRSVIVNALRKLESAGVIESRSLGMKGTFIKVKKEKFLDELERNK.

A GAF domain region spans residues 1 to 155 (MSLLSKTREL…AATVIGMEIL (155 aa)). The segment at residues 203-222 (ASKVADRVGITRSVIVNALR) is a DNA-binding region (H-T-H motif).

It belongs to the CodY family.

Its subcellular location is the cytoplasm. Functionally, DNA-binding global transcriptional regulator which is involved in the adaptive response to starvation and acts by directly or indirectly controlling the expression of numerous genes in response to nutrient availability. During rapid exponential growth, CodY is highly active and represses genes whose products allow adaptation to nutrient depletion. The sequence is that of Global transcriptional regulator CodY from Staphylococcus haemolyticus (strain JCSC1435).